The primary structure comprises 358 residues: Chorismate synthase (358 aa).

Residue R47 coordinates NADP(+). Residues 124-126, 240-241, G284, 299-303, and R325 each bind FMN; these read RSS, NA, and KPVAT.

It belongs to the chorismate synthase family. Homotetramer. FMNH2 serves as cofactor.

It carries out the reaction 5-O-(1-carboxyvinyl)-3-phosphoshikimate = chorismate + phosphate. It functions in the pathway metabolic intermediate biosynthesis; chorismate biosynthesis; chorismate from D-erythrose 4-phosphate and phosphoenolpyruvate: step 7/7. Functionally, catalyzes the anti-1,4-elimination of the C-3 phosphate and the C-6 proR hydrogen from 5-enolpyruvylshikimate-3-phosphate (EPSP) to yield chorismate, which is the branch point compound that serves as the starting substrate for the three terminal pathways of aromatic amino acid biosynthesis. This reaction introduces a second double bond into the aromatic ring system. This chain is Chorismate synthase, found in Bacteroides fragilis (strain YCH46).